We begin with the raw amino-acid sequence, 233 residues long: Large ribosomal subunit protein uL1 (233 aa).

Belongs to the universal ribosomal protein uL1 family. As to quaternary structure, part of the 50S ribosomal subunit.

Binds directly to 23S rRNA. The L1 stalk is quite mobile in the ribosome, and is involved in E site tRNA release. Its function is as follows. Protein L1 is also a translational repressor protein, it controls the translation of the L11 operon by binding to its mRNA. This is Large ribosomal subunit protein uL1 from Geobacillus sp. (strain WCH70).